Here is a 634-residue protein sequence, read N- to C-terminus: Probable potassium transport system protein Kup (634 aa).

Transmembrane regions (helical) follow at residues 19–39, 62–82, 113–133, 150–170, 177–197, 225–245, 259–279, 291–311, 349–369, 379–399, 406–426, and 431–451; these read AVGLMVGAVGVCYGDIGTSPL, VLSLIFWSLIWVVSIKYVIFV, FVVVAGLIGAALFYGDSMITP, GLEHWTVPLALIVLIGLFLIQ, IGILFGPVMVLWFGALAALGV, IGVAILGATVLALTGAEALYA, WFLLVLPALVLNYFGQGATIL, LLAPGWALLPMVALSTLATVI, IYIGGVNWALMVGVVLLVLGF, YGVAVTGTMLITTLLMGVVIW, LWLGVPFFCVMLAVDSLFFAA, and VVQGGAFPVIAGIVIFILMST.

Belongs to the HAK/KUP transporter (TC 2.A.72) family.

Its subcellular location is the cell inner membrane. The enzyme catalyses K(+)(in) + H(+)(in) = K(+)(out) + H(+)(out). Transport of potassium into the cell. Likely operates as a K(+):H(+) symporter. The protein is Probable potassium transport system protein Kup of Pseudomonas paraeruginosa (strain DSM 24068 / PA7) (Pseudomonas aeruginosa (strain PA7)).